Consider the following 332-residue polypeptide: Packaging enzyme P4 (332 aa).

The involved in the regulation and mechanisms of transcription, replication and genome packaging stretch occupies residues 111-138 (RWPSEGIYSGVTALMGATGSGKSITLNE). 126–133 (GATGSGKS) provides a ligand contact to ATP. Positions 310–332 (LERGSVDTDDRNSAPRRGANFSL) are disordered. Residues 313-322 (GSVDTDDRNS) show a composition bias toward basic and acidic residues.

In terms of assembly, homohexamer. Part of the packaging complex composed of RDRP, P4 and P7.

The protein resides in the virion. It carries out the reaction a ribonucleoside 5'-triphosphate + H2O = a ribonucleoside 5'-diphosphate + phosphate + H(+). Its function is as follows. Packaging motor with helicase and translocase activities. Part of the packaging complex that packages the viral RNA segments, replicate them into a double-stranded form and transcribe them. is one of the structural proteins of the polyhedral procapsid, which is responsible for genomic replication and transcription. Displays single-stranded RNA-stimulated NTPase activity. The polypeptide is Packaging enzyme P4 (P4) (Pseudomonas savastanoi pv. phaseolicola (Pseudomonas syringae pv. phaseolicola)).